A 217-amino-acid chain; its full sequence is 3,4-dihydroxy-2-butanone 4-phosphate synthase (217 aa).

Residues 37–38 (RE), Asp42, 150–154 (RGGHT), and Glu174 each bind D-ribulose 5-phosphate. Glu38 provides a ligand contact to Mg(2+). Residue His153 coordinates Mg(2+).

Belongs to the DHBP synthase family. Homodimer. Mg(2+) is required as a cofactor. Mn(2+) serves as cofactor.

It catalyses the reaction D-ribulose 5-phosphate = (2S)-2-hydroxy-3-oxobutyl phosphate + formate + H(+). It participates in cofactor biosynthesis; riboflavin biosynthesis; 2-hydroxy-3-oxobutyl phosphate from D-ribulose 5-phosphate: step 1/1. In terms of biological role, catalyzes the conversion of D-ribulose 5-phosphate to formate and 3,4-dihydroxy-2-butanone 4-phosphate. The chain is 3,4-dihydroxy-2-butanone 4-phosphate synthase from Sodalis glossinidius (strain morsitans).